The sequence spans 407 residues: Protoasukamycin 4-monooxygenase (407 aa).

In terms of assembly, does not interact with AsuE2, suggesting a possible transient interaction between the two enzymes instead of formation of a stable complex. FMN serves as cofactor. FAD is required as a cofactor. The cofactor is riboflavin.

The enzyme catalyses protoasukamycin + NADH + O2 + H(+) = 4-hydroxyprotoasukamycin + NAD(+) + H2O. It functions in the pathway antibiotic biosynthesis. With respect to regulation, when flavin concentration is low, activity is enhanced by the presence of the NADH-dependent flavin reductase AsuE2. In the presence of abundant flavin, activity of AsuE1 is not affected by AsuE2. Functionally, involved in the biosynthesis of the antibiotic asukamycin. Catalyzes the conversion of protoasukamycin to 4-hydroxyprotoasukamycin. Can also convert some protoasukamycin derivatives into their corresponding 4-hydroxyprotoasukamycin derivatives. Can also use NADPH, but catalytic efficiency is 50-fold higher with NADH. The chain is Protoasukamycin 4-monooxygenase from Streptomyces nodosus subsp. asukaensis.